Here is a 313-residue protein sequence, read N- to C-terminus: Putative S-adenosyl-L-methionine-dependent methyltransferase MUL_0706 (313 aa).

S-adenosyl-L-methionine contacts are provided by residues aspartate 132 and 161-162 (DL).

This sequence belongs to the UPF0677 family.

Its function is as follows. Exhibits S-adenosyl-L-methionine-dependent methyltransferase activity. The polypeptide is Putative S-adenosyl-L-methionine-dependent methyltransferase MUL_0706 (Mycobacterium ulcerans (strain Agy99)).